Here is a 296-residue protein sequence, read N- to C-terminus: UDP-N-acetylenolpyruvoylglucosamine reductase (296 aa).

Positions 26-191 (RIGGPANYFK…LSATFRLSRN (166 aa)) constitute an FAD-binding PCMH-type domain. Residue Arg170 is part of the active site. Cys218 (proton donor) is an active-site residue. Glu287 is a catalytic residue.

This sequence belongs to the MurB family. It depends on FAD as a cofactor.

The protein localises to the cytoplasm. The enzyme catalyses UDP-N-acetyl-alpha-D-muramate + NADP(+) = UDP-N-acetyl-3-O-(1-carboxyvinyl)-alpha-D-glucosamine + NADPH + H(+). It participates in cell wall biogenesis; peptidoglycan biosynthesis. Its function is as follows. Cell wall formation. In Chlamydia abortus (strain DSM 27085 / S26/3) (Chlamydophila abortus), this protein is UDP-N-acetylenolpyruvoylglucosamine reductase.